A 219-amino-acid chain; its full sequence is Pyridoxal 5'-phosphate synthase subunit PDX2 (219 aa).

Residue 52-54 participates in L-glutamine binding; it reads GES. The Nucleophile role is filled by Cys-87. L-glutamine is bound by residues Arg-121 and 153–154; that span reads IR. Residues His-196 and Glu-198 each act as charge relay system in the active site.

The protein belongs to the glutaminase PdxT/SNO family. In the presence of Pdx1, forms a dodecamer of heterodimers. Only shows activity in the heterodimer.

The protein localises to the cytoplasm. It carries out the reaction aldehydo-D-ribose 5-phosphate + D-glyceraldehyde 3-phosphate + L-glutamine = pyridoxal 5'-phosphate + L-glutamate + phosphate + 3 H2O + H(+). It catalyses the reaction L-glutamine + H2O = L-glutamate + NH4(+). It participates in cofactor biosynthesis; pyridoxal 5'-phosphate biosynthesis. Catalyzes the hydrolysis of glutamine to glutamate and ammonia as part of the biosynthesis of pyridoxal 5'-phosphate. The resulting ammonia molecule is channeled to the active site of Pdx1. The protein is Pyridoxal 5'-phosphate synthase subunit PDX2 of Plasmodium falciparum (isolate 3D7).